An 822-amino-acid chain; its full sequence is Lysine-specific histone demethylase 2 (822 aa).

Positions 1–11 (MATPRGRTKKK) are enriched in basic residues. Residues 1-47 (MATPRGRTKKKASFDHSPDSLPLRSSGRQAKKKATETTDEDEDGGSE) form a disordered region. A phosphoserine mark is found at Ser-13, Ser-17, and Ser-26. Residues Cys-53, Cys-58, Cys-65, Cys-73, His-84, His-90, Cys-92, Cys-95, Cys-142, Cys-147, Cys-169, and Cys-185 each coordinate Zn(2+). The segment at 133–193 (DQQLPYWVQC…HCSLPEDLRV (61 aa)) adopts a CW-type zinc-finger fold. Ser-247 bears the Phosphoserine mark. Residues 273–292 (YQPNECGKALCVRPDVMELD) are GLYR1-binding. The SWIRM domain maps to 275-373 (PNECGKALCV…TGVLSVGADQ (99 aa)). 383–439 (KSVIIIGAGPAGLAAARQLHNFGIKVTVLEAKDRIGGRVWDDKSFKGVTVGRGAQIV) serves as a coordination point for FAD. Histone H3-binding stretches follow at residues 438-467 (IVNGCINNPVALMCEQLGISMHKFGERCDL), 487-498 (FNALLDVVSEWR), and 538-572 (FHLSNLEYACGSNLHQVSARSWDHNEFFAQFAGDH). Residues 564-566 (FFA) are GLYR1-binding. Residues Val-598, Glu-795, and 803–805 (QTV) each bind FAD. The GLYR1-binding stretch occupies residues 798-814 (NRHFPQTVTGAYLSGVR).

Belongs to the flavin monoamine oxidase family. In terms of assembly, interacts with its cofactor GLYR1 at nucleosomes; this interaction stimulates H3K4me1 and H3K4me2 demethylation. In contrast to KDM1A, does not form a complex with RCOR1/CoREST. Possible accessory component of the polycomb repressive deubiquitinase (PR-DUB) complex, at least composed of BAP1, one of ASXL1, ASXL2 or (probably) ASXL3 and one of MBD5 or MBD6. The PR-DUB core associates with a number of accessory proteins, including FOXK1, FOXK2, KDM1B, HCFC1 and OGT; KDM1B specifically associates with ASXL2 PR-DUB complexes. FAD is required as a cofactor. Requires Zn(2+) as cofactor.

The protein resides in the nucleus. The protein localises to the chromosome. The catalysed reaction is N(6),N(6)-dimethyl-L-lysyl(4)-[histone H3] + 2 A + 2 H2O = L-lysyl(4)-[histone H3] + 2 formaldehyde + 2 AH2. The enzyme catalyses N(6)-methyl-L-lysyl(4)-[histone H3] + A + H2O = L-lysyl(4)-[histone H3] + formaldehyde + AH2. With respect to regulation, histone H3K4me1 and H3K4me2 demethylase activity is inhibited by DNA, this inhibition is released in complex with GLYR1. Histone demethylase that demethylates 'Lys-4' of histone H3, a specific tag for epigenetic transcriptional activation, thereby acting as a corepressor. Required for de novo DNA methylation of a subset of imprinted genes during oogenesis. Acts by oxidizing the substrate by FAD to generate the corresponding imine that is subsequently hydrolyzed. Demethylates both mono- and di-methylated 'Lys-4' of histone H3. Has no effect on tri-methylated 'Lys-4', mono-, di- or tri-methylated 'Lys-9', mono-, di- or tri-methylated 'Lys-27', mono-, di- or tri-methylated 'Lys-36' of histone H3, or on mono-, di- or tri-methylated 'Lys-20' of histone H4. Alone, it is unable to demethylate H3K4me on nucleosomes and requires the presence of GLYR1 to achieve such activity, they form a multifunctional enzyme complex that modifies transcribed chromatin and facilitates Pol II transcription through nucleosomes. The protein is Lysine-specific histone demethylase 2 of Homo sapiens (Human).